We begin with the raw amino-acid sequence, 499 residues long: UDP-N-acetylmuramoyl-L-alanyl-D-glutamate--2,6-diaminopimelate ligase (499 aa).

A UDP-N-acetyl-alpha-D-muramoyl-L-alanyl-D-glutamate-binding site is contributed by S32. 117-123 is an ATP binding site; it reads GTNGKTT. UDP-N-acetyl-alpha-D-muramoyl-L-alanyl-D-glutamate contacts are provided by residues 159 to 160, S186, Q192, and R194; that span reads TT. K226 carries the post-translational modification N6-carboxylysine. Meso-2,6-diaminopimelate contacts are provided by residues R394, 418–421, G469, and E473; that span reads DNPR. The short motif at 418 to 421 is the Meso-diaminopimelate recognition motif element; that stretch reads DNPR.

This sequence belongs to the MurCDEF family. MurE subfamily. It depends on Mg(2+) as a cofactor. In terms of processing, carboxylation is probably crucial for Mg(2+) binding and, consequently, for the gamma-phosphate positioning of ATP.

The protein resides in the cytoplasm. It carries out the reaction UDP-N-acetyl-alpha-D-muramoyl-L-alanyl-D-glutamate + meso-2,6-diaminopimelate + ATP = UDP-N-acetyl-alpha-D-muramoyl-L-alanyl-gamma-D-glutamyl-meso-2,6-diaminopimelate + ADP + phosphate + H(+). It functions in the pathway cell wall biogenesis; peptidoglycan biosynthesis. Catalyzes the addition of meso-diaminopimelic acid to the nucleotide precursor UDP-N-acetylmuramoyl-L-alanyl-D-glutamate (UMAG) in the biosynthesis of bacterial cell-wall peptidoglycan. The sequence is that of UDP-N-acetylmuramoyl-L-alanyl-D-glutamate--2,6-diaminopimelate ligase from Synechococcus sp. (strain WH7803).